A 476-amino-acid chain; its full sequence is MTRPPAPPPGAPGADELLDCGLLSPVRAGTPVEALVCDSAWLQAMLDAEAALTRAQARTGFLPAAAAEAITAAARADRIDLLAVARGARETANPVVGLVAALTAAVRRDDPAAAEYVHRGSTSQDVLDTGAMLVARRALRLIGDDLDRAADALAALAADHRDTPMAGRTLALHAVPTTFGLKAAGWLELVSEAAGRVARLRDGLPFSLGGAAGTLAGYFGDRTDRGDPAVLLDRLLDAYAAETGLARPVLPWHVLRTPVADLAAVLAFTAGALGKIAVDVQSLARTEVAEVAEPAVEGRGASSAMPHKRNPVLSTLIRSAALQVPALATGLTQCLVSEDERSAGAWHAEWQPLRECLRLTGGAARTAVELAAGLEVDAARMRANLDLTDGRIVSESVAVALTPLLGRQAAKELLTRAAFTAGHEGRTLGEVLGELPELDGVLPKERWEALLDPARATGVAGALVDGALARRRPPAR.

Fumarate contacts are provided by R137, R140, and R201. The active-site Proton acceptor is the S302. 2 residues coordinate fumarate: K308 and N310. R341 functions as the Proton donor in the catalytic mechanism.

The protein belongs to the class-II fumarase/aspartase family. As to quaternary structure, homotetramer.

The catalysed reaction is 2-nitrobutanedioate = fumarate + nitrite + H(+). It participates in antibiotic biosynthesis. Functionally, part of a gene cluster involved in the biosynthesis of cremeomycin, a light-sensitive o-diazoquinone with antibacterial and antiproliferative effects. Catalyzes the formation of nitrous acid from nitrosuccinic acid (2-nitrobutanedioate) by elimination of its nitro group. In Streptomyces cremeus, this protein is Nitrosuccinate lyase.